The primary structure comprises 369 residues: Protein pxr-1 (369 aa).

Residues Met-1 to Arg-23 are disordered. Residues Glu-25–Asn-79 form the G-patch domain. Residues Glu-147–Ser-338 are disordered. Positions Gln-153–Gln-167 are enriched in polar residues. The segment covering Ser-218 to Lys-227 has biased composition (basic residues). Basic and acidic residues predominate over residues Glu-228 to Asp-237. Residues Lys-267–Lys-292 show a composition bias toward basic residues. The span at Glu-304–Ala-318 shows a compositional bias: basic and acidic residues. The span at Thr-322–Ser-338 shows a compositional bias: low complexity.

The protein belongs to the PINX1 family.

The protein localises to the nucleus. It is found in the nucleolus. Involved in rRNA-processing at A0, A1 and A2 sites and negatively regulates telomerase. The sequence is that of Protein pxr-1 (pxr-1) from Neurospora crassa (strain ATCC 24698 / 74-OR23-1A / CBS 708.71 / DSM 1257 / FGSC 987).